A 790-amino-acid chain; its full sequence is LMBR1 domain-containing protein 2 homolog B (790 aa).

Low complexity predominate over residues 1–21 (MSSNTTTPTPTSTPTPTSSPS). The interval 1 to 22 (MSSNTTTPTPTSTPTPTSSPSI) is disordered. 5 helical membrane passes run 34-54 (FGNLLFFAISLVLCGVVVLIG), 66-86 (IYATFFSFLGWFMCFSIAYLV), 128-148 (FLYFGSLILCWVIFPVLQSFS), 167-187 (VILYTFMFIAGLIGIIVILSV), and 195-215 (FLSFVMLLANVYGVILITITM). Residues 236–266 (LRNYRVEAVVLKTELEDVKRQLIDHLKLIKT) are a coiled coil. The next 3 helical transmembrane spans lie at 401-421 (FIIAGLVCVCLSGIILWSEIV), 442-462 (PGIGLQIFCFIPMIYMCVCSY), and 539-559 (FTLFFPIFMIVVCVISFFNLH). 3 disordered regions span residues 630–665 (SQLDGASGAHREPSIDSSNRYKPTPTKTSINIPKLS), 701–751 (LGEK…TKDK), and 765–790 (SFQDDDDHTFDDIEMGAYGTGRKNKK). Over residues 644 to 665 (IDSSNRYKPTPTKTSINIPKLS) the composition is skewed to polar residues. A compositionally biased stretch (low complexity) spans 706 to 734 (NASNNNNNNNNNNNNNNSNNKNSNNNNNS). Polar residues predominate over residues 735 to 746 (ILTSNYESYSTP). Over residues 766–778 (FQDDDDHTFDDIE) the composition is skewed to acidic residues.

The protein belongs to the LIMR family.

It is found in the membrane. The chain is LMBR1 domain-containing protein 2 homolog B from Dictyostelium discoideum (Social amoeba).